A 610-amino-acid chain; its full sequence is Propanediol dehydratase-reactivating factor large subunit (610 aa).

11-13 (NSS) lines the ATP pocket. 3 residues coordinate Mg(2+): Thr105, Asp166, and Asp183. ATP-binding positions include 459–462 (EEIK), 557–558 (GS), and Arg591.

This sequence belongs to the DdrA/PduG family. Forms a heterotetramer PduG(2)/PduH(2). The cofactor is Mg(2+).

Its subcellular location is the bacterial microcompartment. The catalysed reaction is ATP + H2O = ADP + phosphate + H(+). It functions in the pathway polyol metabolism; 1,2-propanediol degradation. In terms of biological role, large subunit of the propanediol dehydratase-reactivating factor (DDR), which reactivates suicidally inhibited adenosylcobalamin-dependent propanediol dehydratase (diol dehydratase, DDH) found in the bacterial microcompartment (BMC) dedicated to 1,2-propanediol (1,2-PD) degradation. Reactivates inactivated DDH in the presence of ATP, Mg(2+) and free adenosylcobalamin (AdoCbl), by mediating the exchange of the tightly bound damaged cofactor AdoCbl for a free intact one. This subunit contains the adenosine nucleotide binding site. Its function is as follows. Expression of a cosmid containing the full 21-gene pdu operon in E.coli allows E.coli to grow on 1,2-propanediol (1,2-PD) with the appearance of bacterial microcompartments (BMC) in its cytoplasm. Functionally, the 1,2-PD-specific bacterial microcompartment (BMC) concentrates low levels of 1,2-PD catabolic enzymes, concentrates volatile reaction intermediates thus enhancing pathway flux and keeps the level of toxic, mutagenic propionaldehyde low. This is Propanediol dehydratase-reactivating factor large subunit from Citrobacter freundii.